We begin with the raw amino-acid sequence, 267 residues long: 4-hydroxy-tetrahydrodipicolinate reductase (267 aa).

Residues 8 to 13, E34, 98 to 100, and 122 to 125 contribute to the NAD(+) site; these read GAAGRM, GST, and APNM. H155 acts as the Proton donor/acceptor in catalysis. H156 serves as a coordination point for (S)-2,3,4,5-tetrahydrodipicolinate. The active-site Proton donor is K159. 165 to 166 contacts (S)-2,3,4,5-tetrahydrodipicolinate; that stretch reads GT.

Belongs to the DapB family.

The protein resides in the cytoplasm. The enzyme catalyses (S)-2,3,4,5-tetrahydrodipicolinate + NAD(+) + H2O = (2S,4S)-4-hydroxy-2,3,4,5-tetrahydrodipicolinate + NADH + H(+). It catalyses the reaction (S)-2,3,4,5-tetrahydrodipicolinate + NADP(+) + H2O = (2S,4S)-4-hydroxy-2,3,4,5-tetrahydrodipicolinate + NADPH + H(+). It participates in amino-acid biosynthesis; L-lysine biosynthesis via DAP pathway; (S)-tetrahydrodipicolinate from L-aspartate: step 4/4. In terms of biological role, catalyzes the conversion of 4-hydroxy-tetrahydrodipicolinate (HTPA) to tetrahydrodipicolinate. In Syntrophotalea carbinolica (strain DSM 2380 / NBRC 103641 / GraBd1) (Pelobacter carbinolicus), this protein is 4-hydroxy-tetrahydrodipicolinate reductase.